The sequence spans 66 residues: Large ribosomal subunit protein bL31 (66 aa).

Cysteine 16, cysteine 18, cysteine 36, and cysteine 39 together coordinate Zn(2+).

It belongs to the bacterial ribosomal protein bL31 family. Type A subfamily. In terms of assembly, part of the 50S ribosomal subunit. The cofactor is Zn(2+).

Functionally, binds the 23S rRNA. This Pelobacter propionicus (strain DSM 2379 / NBRC 103807 / OttBd1) protein is Large ribosomal subunit protein bL31.